Consider the following 812-residue polypeptide: Valine--tRNA ligase (812 aa).

The 'HIGH' region signature appears at 46–56 (PTVSGQLHIGH). The 'KMSKS' region signature appears at 536–540 (KMSKS). Residue Lys-539 participates in ATP binding.

It belongs to the class-I aminoacyl-tRNA synthetase family. ValS type 2 subfamily. Monomer.

Its subcellular location is the cytoplasm. It catalyses the reaction tRNA(Val) + L-valine + ATP = L-valyl-tRNA(Val) + AMP + diphosphate. Its function is as follows. Catalyzes the attachment of valine to tRNA(Val). As ValRS can inadvertently accommodate and process structurally similar amino acids such as threonine, to avoid such errors, it has a 'posttransfer' editing activity that hydrolyzes mischarged Thr-tRNA(Val) in a tRNA-dependent manner. The polypeptide is Valine--tRNA ligase (Rickettsia conorii (strain ATCC VR-613 / Malish 7)).